Here is a 61-residue protein sequence, read N- to C-terminus: Small ribosomal subunit protein uS14 (61 aa).

Residues Cys24, Cys27, Cys40, and Cys43 each contribute to the Zn(2+) site.

Belongs to the universal ribosomal protein uS14 family. Zinc-binding uS14 subfamily. As to quaternary structure, part of the 30S ribosomal subunit. Contacts proteins S3 and S10. The cofactor is Zn(2+).

Functionally, binds 16S rRNA, required for the assembly of 30S particles and may also be responsible for determining the conformation of the 16S rRNA at the A site. The chain is Small ribosomal subunit protein uS14 from Mycoplasma mobile (strain ATCC 43663 / 163K / NCTC 11711) (Mesomycoplasma mobile).